Reading from the N-terminus, the 125-residue chain is Small ribosomal subunit protein bS6 (125 aa).

This sequence belongs to the bacterial ribosomal protein bS6 family.

Binds together with bS18 to 16S ribosomal RNA. The sequence is that of Small ribosomal subunit protein bS6 from Campylobacter jejuni subsp. jejuni serotype O:23/36 (strain 81-176).